Reading from the N-terminus, the 384-residue chain is Zinc metalloproteinase nas-12 (384 aa).

The first 25 residues, 1–25 (MLYIPQFSIYFCLGYLLLFCKISNA), serve as a signal peptide directing secretion. The Peptidase M12A domain occupies 73-271 (VSIKGSSMNR…EKLNRLGQCG (199 aa)). 5 disulfides stabilise this stretch: Cys-116/Cys-270, Cys-137/Cys-156, Cys-287/Cys-325, Cys-296/Cys-318, and Cys-305/Cys-322. Residue His-164 coordinates Zn(2+). The active site involves Glu-165. Positions 168 and 174 each coordinate Zn(2+). Positions 287-325 (CQDVATAVSCEGNRRRGMCKNPFYKQMMIKSCQKTCRLC) constitute a ShKT 1 domain. Asn-340 carries N-linked (GlcNAc...) asparagine glycosylation. Cystine bridges form between Cys-348-Cys-384, Cys-355-Cys-377, and Cys-364-Cys-381. Positions 348-384 (CEDKHPRCDIYSHNGFCTLPFYDDVRYQLCAKTCNLC) constitute a ShKT 2 domain.

The cofactor is Zn(2+). Expressed in pharyngeal glands.

It localises to the secreted. Its function is as follows. Metalloprotease. This chain is Zinc metalloproteinase nas-12 (nas-12), found in Caenorhabditis elegans.